Here is a 461-residue protein sequence, read N- to C-terminus: Bifunctional protein GlmU (461 aa).

Positions Met1–Arg227 are pyrophosphorylase. Residues Leu8–Gly11, Lys22, Gln73, Gly78–Thr79, Tyr100–Asp102, Gly137, Glu152, Asn167, and Asn225 each bind UDP-N-acetyl-alpha-D-glucosamine. Mg(2+) is bound at residue Asp102. Residue Asn225 coordinates Mg(2+). The linker stretch occupies residues Arg228–Arg248. The segment at Gly249–Glu461 is N-acetyltransferase. Residues Arg332 and Lys350 each coordinate UDP-N-acetyl-alpha-D-glucosamine. The active-site Proton acceptor is the His362. Residues Tyr365 and Asn376 each contribute to the UDP-N-acetyl-alpha-D-glucosamine site. Residues Ala379, Asn385–Tyr386, Ser404, Ala422, and Arg439 each bind acetyl-CoA.

It in the N-terminal section; belongs to the N-acetylglucosamine-1-phosphate uridyltransferase family. This sequence in the C-terminal section; belongs to the transferase hexapeptide repeat family. Homotrimer. Requires Mg(2+) as cofactor.

The protein resides in the cytoplasm. It catalyses the reaction alpha-D-glucosamine 1-phosphate + acetyl-CoA = N-acetyl-alpha-D-glucosamine 1-phosphate + CoA + H(+). It carries out the reaction N-acetyl-alpha-D-glucosamine 1-phosphate + UTP + H(+) = UDP-N-acetyl-alpha-D-glucosamine + diphosphate. It functions in the pathway nucleotide-sugar biosynthesis; UDP-N-acetyl-alpha-D-glucosamine biosynthesis; N-acetyl-alpha-D-glucosamine 1-phosphate from alpha-D-glucosamine 6-phosphate (route II): step 2/2. Its pathway is nucleotide-sugar biosynthesis; UDP-N-acetyl-alpha-D-glucosamine biosynthesis; UDP-N-acetyl-alpha-D-glucosamine from N-acetyl-alpha-D-glucosamine 1-phosphate: step 1/1. It participates in bacterial outer membrane biogenesis; LPS lipid A biosynthesis. In terms of biological role, catalyzes the last two sequential reactions in the de novo biosynthetic pathway for UDP-N-acetylglucosamine (UDP-GlcNAc). The C-terminal domain catalyzes the transfer of acetyl group from acetyl coenzyme A to glucosamine-1-phosphate (GlcN-1-P) to produce N-acetylglucosamine-1-phosphate (GlcNAc-1-P), which is converted into UDP-GlcNAc by the transfer of uridine 5-monophosphate (from uridine 5-triphosphate), a reaction catalyzed by the N-terminal domain. The polypeptide is Bifunctional protein GlmU (Methylococcus capsulatus (strain ATCC 33009 / NCIMB 11132 / Bath)).